We begin with the raw amino-acid sequence, 20 residues long: VVGGDECNINEHRFLVALYY.

The region spanning 1–20 is the Peptidase S1 domain; it reads VVGGDECNINEHRFLVALYY.

This sequence belongs to the peptidase S1 family. Snake venom subfamily. As to quaternary structure, monomer. Post-translationally, glycosylated. Expressed by the venom gland.

The protein resides in the secreted. Its activity is regulated as follows. Strongly inactivated by diisopropylfluorophosphate (DFP) and to a lesser extent by tosyl-L-lysine chloromethyl ketone (TLCK). In terms of biological role, thrombin-like snake venom serine protease. Releases both fibrinopeptides A and B from fibrinogen (FGA and FGB) to form fibrin clots. The chain is Thrombin-like enzyme okinaxobin-2 from Ovophis okinavensis (Ryukyu Island pit viper).